The chain runs to 402 residues: Fugralins biosynthesis cluster protein 2 (402 aa).

5 helical membrane-spanning segments follow: residues 28-48 (NCLAYTVLILCAVITTICFLL), 109-129 (ILIFGVCYSFVLPFLKIAILV), 145-165 (IFWWGCMVIGFVQATSNTAIV), 232-252 (VIFGLGLLACVSAAVRLAVTV), and 264-284 (LAPLVFWATAEMTCGFFIVCV). Disordered regions lie at residues 312-335 (NPNTADRYAKSGTKGSQLSSTGPK) and 378-402 (TQDNRSTSDSEGHAAFPASQKPWGV). Residues 324–334 (TKGSQLSSTGP) show a composition bias toward polar residues. Asparagine 381 carries N-linked (GlcNAc...) asparagine glycosylation.

This sequence belongs to the SAT4 family.

It is found in the membrane. It functions in the pathway secondary metabolite biosynthesis. Functionally, part of the gene cluster that mediates the biosynthesis of the tetraketides fugralins such as linear fugralin A and cyclic fugralin B, volatile compounds that play a role in the asexual reproductive cycle but are not involved in pathogenicity. One of the key features of fugralins is the presence of a double methyl group, which is only rarely encountered in fungal secondary metabolites. As the fugralins cluster does not contain an independent methyltransferase, the PKS FGR1 is probably responsible for adding two methyl groups to the same carbon atom. Fugralin B is similar to fugralin A except for a cyclization between the carboxylic acid C-8 and the alcohol on C-4 resulting in a six membered lactone ring, probably catalyzed by the cyclase FGR4. The exact role of the individual cluster genes remains unknown and further work is needed to unravel the biosynthetic pathway. The chain is Fugralins biosynthesis cluster protein 2 from Gibberella zeae (strain ATCC MYA-4620 / CBS 123657 / FGSC 9075 / NRRL 31084 / PH-1) (Wheat head blight fungus).